A 255-amino-acid chain; its full sequence is Large ribosomal subunit protein uL2 (255 aa).

Residues 201 to 229 (YAHPHGGGSHQQGGTPVKKNAPPGQKVGF) form a disordered region.

This sequence belongs to the universal ribosomal protein uL2 family. As to quaternary structure, part of the 50S ribosomal subunit. Forms a bridge to the 30S subunit in the 70S ribosome.

In terms of biological role, one of the primary rRNA binding proteins. Required for association of the 30S and 50S subunits to form the 70S ribosome, for tRNA binding and peptide bond formation. It has been suggested to have peptidyltransferase activity; this is somewhat controversial. Makes several contacts with the 16S rRNA in the 70S ribosome. The protein is Large ribosomal subunit protein uL2 of Caldivirga maquilingensis (strain ATCC 700844 / DSM 13496 / JCM 10307 / IC-167).